The sequence spans 727 residues: Synaptic vesicle glycoprotein 2C (727 aa).

Positions 1–57 (MEDSYKDRTSLMKGAKDIAKEVKKQTVKKVNQAVDRAQDEYTQRSYSRFQDEDDDDD) are interaction with SYT1. Residues 1 to 154 (MEDSYKDRTS…CGHGRFQWAL (154 aa)) are Cytoplasmic-facing. The segment at 22 to 120 (VKKQTVKKVN…QPKGDEYKDR (99 aa)) is disordered. 2 positions are modified to phosphoserine: serine 75 and serine 76. The residue at position 79 (threonine 79) is a Phosphothreonine. A helical transmembrane segment spans residues 155–175 (FFVLGMALMADGVEVFVVGFV). Over 176–191 (LPSAETDLCIPNSGSG) the chain is Extracellular. A helical transmembrane segment spans residues 192-212 (WLGSIVYLGMMVGAFFWGGLA). The Cytoplasmic segment spans residues 213 to 226 (DKVGRKQSLLICMS). The helical transmembrane segment at 227-247 (VNGFFAFLSSFVQGYGFFLLC) threads the bilayer. A topological domain (extracellular) is located at residue arginine 248. Residues 249–269 (LLSGFGIGGAIPTVFSYFAEV) form a helical membrane-spanning segment. The Cytoplasmic segment spans residues 270-280 (LAREKRGEHLS). A helical transmembrane segment spans residues 281–301 (WLCMFWMIGGIYASAMAWAII). The Extracellular segment spans residues 302–320 (PHYGWSFSMGSAYQFHSWR). The chain crosses the membrane as a helical span at residues 321–341 (VFVIVCALPCVSSVVALTFMP). The Cytoplasmic portion of the chain corresponds to 342–437 (ESPRFLLEVG…PVRENTIKLT (96 aa)). Residues 438-458 (IVWFTLSFGYYGLSVWFPDVI) traverse the membrane as a helical segment. The Extracellular portion of the chain corresponds to 459–578 (KHLQSDEYAL…CQITFDDDYS (120 aa)). Tyrosine 466 carries the phosphotyrosine modification. 5 N-linked (GlcNAc...) asparagine glycosylation sites follow: asparagine 480, asparagine 484, asparagine 534, asparagine 559, and asparagine 565. Residues 529 to 566 (NTYFKNCTFIDTLFENTDFEPYKFIDSEFQNCSFLHNK) form a (Microbial infection) C.botulinum neurotoxin type A-binding region. A helical transmembrane segment spans residues 579–599 (AYWIYFVNFLGTLAVLPGNIV). Residues 600–609 (SALLMDRIGR) lie on the Cytoplasmic side of the membrane. Residues 610–630 (LTMLGGSMVLSGISCFFLWFG) form a helical membrane-spanning segment. The Extracellular portion of the chain corresponds to 631 to 636 (TSESMM). The chain crosses the membrane as a helical span at residues 637–657 (IGMLCLYNGLTISAWNSLDVV). Over 658–670 (TVELYPTDRRATG) the chain is Cytoplasmic. The chain crosses the membrane as a helical span at residues 671–693 (FGFLNALCKAAAVLGNLIFGSLV). Residues 694–697 (SITK) lie on the Extracellular side of the membrane. Residues 698–716 (AIPILLASTVLVCGGLVGL) traverse the membrane as a helical segment. Over 717-727 (RLPDTRTQVLM) the chain is Cytoplasmic.

The protein belongs to the major facilitator superfamily. In terms of assembly, interacts with SYT1 in a calcium-dependent manner. (Microbial infection) Interacts with C.botulinum neurotoxin type A (BoNT/A, botA). As to quaternary structure, (Microbial infection) Interacts with C.botulinum neurotoxin type F (BoNT/F). Interaction requires glycosylation of SV2 proteins. In terms of processing, N-glycosylated. Expressed at high levels in very few brain areas including the striatum, midbrain and hindbrain, and in the olfactory bulb. Expressed at lower levels in cerebrum, hippocampus and cerebellum (at protein level). Mainly expressed in brain; also detected in lung, liver, kidney.

It localises to the cytoplasmic vesicle. Its subcellular location is the secretory vesicle. The protein resides in the synaptic vesicle membrane. Functionally, plays a role in the control of regulated secretion in neural and endocrine cells, enhancing selectively low-frequency neurotransmission. Positively regulates vesicle fusion by maintaining the readily releasable pool of secretory vesicles. (Microbial infection) Receptor for C.botulinum neurotoxin type A (BoNT/A, botA); the toxin binds Sv2c via extracellular loop 4. Restores uptake of BoNT/A in rat cells that are deleted for SV2 receptor. Its function is as follows. (Microbial infection) Possible receptor for C.botulinum neurotoxin type D (BoNT/D, botD); BoNT/D does not bind to extracellular loop 4 as do BoNT/A and BoNT/E. Another group does not find a convincing interaction with SV2. In terms of biological role, (Microbial infection) Receptor for C.botulinum neurotoxin type F (BoNT/F); binding requires glycosylation of Asn-573. This is Synaptic vesicle glycoprotein 2C (Sv2c) from Rattus norvegicus (Rat).